A 139-amino-acid chain; its full sequence is Deoxyuridine 5'-triphosphate nucleotidohydrolase (139 aa).

Residues 58–60 (RSG), asparagine 71, 75–77 (LID), and methionine 85 contribute to the substrate site.

This sequence belongs to the dUTPase family. Requires Mg(2+) as cofactor.

The enzyme catalyses dUTP + H2O = dUMP + diphosphate + H(+). It functions in the pathway pyrimidine metabolism; dUMP biosynthesis; dUMP from dCTP (dUTP route): step 2/2. In terms of biological role, this enzyme is involved in nucleotide metabolism: it produces dUMP, the immediate precursor of thymidine nucleotides and it decreases the intracellular concentration of dUTP so that uracil cannot be incorporated into DNA. In Gamma-proteobacterium EBAC31A08, this protein is Deoxyuridine 5'-triphosphate nucleotidohydrolase.